Here is a 352-residue protein sequence, read N- to C-terminus: Pre-rRNA-processing protein ipi1 (352 aa).

The protein belongs to the IPI1/TEX10 family. As to quaternary structure, component of the RIX1 complex, composed of rrm-9/ipi1, rix1/ipi2 and ipi3 in a 1:2:2 stoichiometry. The complex interacts (via rix1) with mdn1 (via its hexameric AAA ATPase ring) and the pre-60S ribosome particles.

The protein localises to the nucleus. Its function is as follows. Component of the RIX1 complex required for processing of ITS2 sequences from 35S pre-rRNA. The sequence is that of Pre-rRNA-processing protein ipi1 (rrm-9) from Neurospora crassa (strain ATCC 24698 / 74-OR23-1A / CBS 708.71 / DSM 1257 / FGSC 987).